The sequence spans 387 residues: Ferrochelatase (387 aa).

Positions 196 and 277 each coordinate Fe cation.

The protein belongs to the ferrochelatase family.

The protein resides in the cytoplasm. It catalyses the reaction heme b + 2 H(+) = protoporphyrin IX + Fe(2+). It participates in porphyrin-containing compound metabolism; protoheme biosynthesis; protoheme from protoporphyrin-IX: step 1/1. Functionally, catalyzes the ferrous insertion into protoporphyrin IX. The sequence is that of Ferrochelatase from Synechococcus sp. (strain RCC307).